A 649-amino-acid chain; its full sequence is Probable ADP-ribosylation factor GTPase-activating protein AGD14 (649 aa).

One can recognise an Arf-GAP domain in the interval 12 to 130 (EKIIRGLMKL…KYAGANDADK (119 aa)). The C4-type zinc-finger motif lies at 27 to 50 (CINCNSLGPQYVCTTFWTFVCMAC). Disordered regions lie at residues 124-159 (GAND…QSPP), 209-279 (FSNE…VRSV), 294-316 (LGEA…SNHV), and 366-391 (FTPA…SAPK). Positions 127–146 (DADKPSKDSQDHVSSEDMTR) are enriched in basic and acidic residues. The segment covering 150 to 159 (SYHSYSQSPP) has biased composition (low complexity). Composition is skewed to polar residues over residues 248 to 257 (PQFQHSNAPP), 269 to 279 (RTTSSGSVRSV), 300 to 315 (ESRQ…TSNH), and 366 to 385 (FTPA…SRPS).

GTPase-activating protein (GAP) for ADP ribosylation factor (ARF). The sequence is that of Probable ADP-ribosylation factor GTPase-activating protein AGD14 (AGD14) from Arabidopsis thaliana (Mouse-ear cress).